The primary structure comprises 230 residues: 5'-methylthioadenosine/S-adenosylhomocysteine nucleosidase (230 aa).

Residue Glu-12 is the Proton acceptor of the active site. Residues Gly-78, Ile-153, and 174-175 each bind substrate; that span reads ME. The active-site Proton donor is Asp-198.

It belongs to the PNP/UDP phosphorylase family. MtnN subfamily.

It catalyses the reaction S-adenosyl-L-homocysteine + H2O = S-(5-deoxy-D-ribos-5-yl)-L-homocysteine + adenine. The catalysed reaction is S-methyl-5'-thioadenosine + H2O = 5-(methylsulfanyl)-D-ribose + adenine. It carries out the reaction 5'-deoxyadenosine + H2O = 5-deoxy-D-ribose + adenine. It participates in amino-acid biosynthesis; L-methionine biosynthesis via salvage pathway; S-methyl-5-thio-alpha-D-ribose 1-phosphate from S-methyl-5'-thioadenosine (hydrolase route): step 1/2. Functionally, catalyzes the irreversible cleavage of the glycosidic bond in both 5'-methylthioadenosine (MTA) and S-adenosylhomocysteine (SAH/AdoHcy) to adenine and the corresponding thioribose, 5'-methylthioribose and S-ribosylhomocysteine, respectively. Also cleaves 5'-deoxyadenosine, a toxic by-product of radical S-adenosylmethionine (SAM) enzymes, into 5-deoxyribose and adenine. This Shewanella piezotolerans (strain WP3 / JCM 13877) protein is 5'-methylthioadenosine/S-adenosylhomocysteine nucleosidase.